A 97-amino-acid polypeptide reads, in one-letter code: DNA-binding protein HU (97 aa).

This sequence belongs to the bacterial histone-like protein family. As to quaternary structure, has been isolated in complexes with 5S rRNA and bL25, and with 5S rRNA, bL25 and uL5. Homodimer.

Histone-like DNA-binding protein which is capable of wrapping DNA to stabilize it, and thus to prevent its denaturation under extreme environmental conditions. In Thermus thermophilus (strain ATCC 27634 / DSM 579 / HB8), this protein is DNA-binding protein HU.